Consider the following 394-residue polypeptide: Nuclear pore glycoprotein p62 (394 aa).

Tandem repeats lie at residues 22–23 (FG), 50–51 (FG), 75–76 (FG), 77–78 (FG), and 116–117 (FG). Positions 22 to 117 (FGLSTGTPAA…GTSAAPPAFG (96 aa)) are 5 X 2 AA repeats of F-G. The segment covering 45 to 57 (KTTFSFGTPAPTA) has biased composition (low complexity). The segment at 45–73 (KTTFSFGTPAPTAGIGGGDADNSKAQAPP) is disordered. The stretch at 211-341 (SYHQLEEHIN…DNLNEANKGQ (131 aa)) forms a coiled coil.

This sequence belongs to the nucleoporin NSP1/NUP62 family. As to expression, expressed in adult male accessory glands (at protein level).

The protein localises to the nucleus. Its subcellular location is the chromosome. It localises to the nucleus envelope. The protein resides in the nuclear pore complex. It is found in the cytoplasm. The protein localises to the cytoskeleton. Its subcellular location is the spindle pole. It localises to the microtubule organizing center. The protein resides in the centrosome. Functionally, essential component of the nuclear pore complex. The N-terminal is probably involved in nucleocytoplasmic transport. The C-terminal is involved in protein-protein interaction probably via coiled-coil formation, promotes its association with centrosomes and may function in anchorage of Nup62 to the pore complex. Binds to transcriptionally active genes. Negatively regulates chromatin attachment to the nuclear envelope, probably by preventing chromatin tethering by Nup154. This is Nuclear pore glycoprotein p62 from Drosophila melanogaster (Fruit fly).